Consider the following 160-residue polypeptide: Cyclic pyranopterin monophosphate synthase (160 aa).

Substrate-binding positions include 74 to 76 and 112 to 113; these read LSH and ME. Residue D127 is part of the active site.

This sequence belongs to the MoaC family. Homohexamer; trimer of dimers.

It catalyses the reaction (8S)-3',8-cyclo-7,8-dihydroguanosine 5'-triphosphate = cyclic pyranopterin phosphate + diphosphate. It participates in cofactor biosynthesis; molybdopterin biosynthesis. Functionally, catalyzes the conversion of (8S)-3',8-cyclo-7,8-dihydroguanosine 5'-triphosphate to cyclic pyranopterin monophosphate (cPMP). This is Cyclic pyranopterin monophosphate synthase from Geobacter sulfurreducens (strain ATCC 51573 / DSM 12127 / PCA).